Reading from the N-terminus, the 225-residue chain is NAD(P)H-quinone oxidoreductase subunit K, chloroplastic (225 aa).

Positions 43, 44, 108, and 139 each coordinate [4Fe-4S] cluster.

It belongs to the complex I 20 kDa subunit family. As to quaternary structure, NDH is composed of at least 16 different subunits, 5 of which are encoded in the nucleus. Requires [4Fe-4S] cluster as cofactor.

Its subcellular location is the plastid. It is found in the chloroplast thylakoid membrane. The enzyme catalyses a plastoquinone + NADH + (n+1) H(+)(in) = a plastoquinol + NAD(+) + n H(+)(out). It carries out the reaction a plastoquinone + NADPH + (n+1) H(+)(in) = a plastoquinol + NADP(+) + n H(+)(out). In terms of biological role, NDH shuttles electrons from NAD(P)H:plastoquinone, via FMN and iron-sulfur (Fe-S) centers, to quinones in the photosynthetic chain and possibly in a chloroplast respiratory chain. The immediate electron acceptor for the enzyme in this species is believed to be plastoquinone. Couples the redox reaction to proton translocation, and thus conserves the redox energy in a proton gradient. The sequence is that of NAD(P)H-quinone oxidoreductase subunit K, chloroplastic from Fagopyrum esculentum subsp. ancestrale (Wild buckwheat).